A 177-amino-acid polypeptide reads, in one-letter code: Large ribosomal subunit protein uL6 (177 aa).

The protein belongs to the universal ribosomal protein uL6 family. Part of the 50S ribosomal subunit.

In terms of biological role, this protein binds to the 23S rRNA, and is important in its secondary structure. It is located near the subunit interface in the base of the L7/L12 stalk, and near the tRNA binding site of the peptidyltransferase center. In Agrobacterium fabrum (strain C58 / ATCC 33970) (Agrobacterium tumefaciens (strain C58)), this protein is Large ribosomal subunit protein uL6.